The following is a 305-amino-acid chain: Peroxisome biogenesis factor 2 (305 aa).

The Peroxisomal matrix segment spans residues 1–15; the sequence is MASRKENAKSANRVL. The helical transmembrane segment at 16-42 threads the bilayer; it reads RISQLDALELNKALEQLVWSQFTQCFH. Over 43 to 48 the chain is Cytoplasmic; sequence GFKPGL. Residues 49 to 74 form a helical membrane-spanning segment; that stretch reads LARFEPEVKACLWVFLWRFTIYSKNA. Residues 75-98 lie on the Peroxisomal matrix side of the membrane; that stretch reads TVGQSVLNIKYKNDFSPNLRYQPP. Lys-84 is subject to N6-acetyllysine. A helical membrane pass occupies residues 99–125; it reads SKNQKIWYAVCTIGGRWLEERCYDLFR. Residues 126–133 lie on the Cytoplasmic side of the membrane; it reads NHHLASFG. The helical transmembrane segment at 134 to 160 threads the bilayer; that stretch reads KVKQCVNFVIGLLKLGGLINFLIFLQR. Topologically, residues 161-187 are peroxisomal matrix; it reads GKFATLTERLLGIHSVFCKPQNICEVG. Residues 188–211 form a helical membrane-spanning segment; sequence FEYMNRELLWHGFAEFLIFLLPLI. The Cytoplasmic portion of the chain corresponds to 212–305; that stretch reads NVQKLKAKLS…GIEMSEVNAL (94 aa). 8 residues coordinate Zn(2+): Cys-244, Cys-247, Cys-259, His-261, Cys-264, Cys-267, Cys-280, and Cys-283. The RING-type zinc-finger motif lies at 244 to 284; the sequence is CALCGEWPTMPHTIGCEHIFCYFCAKSSFLFDVYFTCPKCG.

The protein belongs to the pex2/pex10/pex12 family. In terms of assembly, component of the PEX2-PEX10-PEX12 retrotranslocation channel, composed of PEX2, PEX10 and PEX12. In terms of processing, forms intramolecular and intermolecular disulfide bonds in response to reactive oxygen species (ROS), promoting higher stability.

The protein localises to the peroxisome membrane. The catalysed reaction is [E2 ubiquitin-conjugating enzyme]-S-ubiquitinyl-L-cysteine + [acceptor protein]-L-cysteine = [E2 ubiquitin-conjugating enzyme]-L-cysteine + [acceptor protein]-S-ubiquitinyl-L-cysteine.. The enzyme catalyses S-ubiquitinyl-[E2 ubiquitin-conjugating enzyme]-L-cysteine + [acceptor protein]-L-lysine = [E2 ubiquitin-conjugating enzyme]-L-cysteine + N(6)-ubiquitinyl-[acceptor protein]-L-lysine.. It functions in the pathway protein modification; protein ubiquitination. In terms of biological role, E3 ubiquitin-protein ligase component of a retrotranslocation channel required for peroxisome organization by mediating export of the PEX5 receptor from peroxisomes to the cytosol, thereby promoting PEX5 recycling. The retrotranslocation channel is composed of PEX2, PEX10 and PEX12; each subunit contributing transmembrane segments that coassemble into an open channel that specifically allows the passage of PEX5 through the peroxisomal membrane. PEX2 also regulates peroxisome organization by acting as a E3 ubiquitin-protein ligase. PEX2 ubiquitinates PEX5 during its passage through the retrotranslocation channel: catalyzes monoubiquitination of PEX5 at 'Cys-11', a modification that acts as a signal for PEX5 extraction into the cytosol. Required for pexophagy in response to starvation by mediating ubiquitination of peroxisomal proteins, such as PEX5 and ABCD3/PMP70. Also involved in the response to reactive oxygen species (ROS) by mediating 'Lys-48'-linked polyubiquitination and subsequent degradation of PNPLA2/ATGL, thereby regulating lipolysis. The polypeptide is Peroxisome biogenesis factor 2 (Homo sapiens (Human)).